An 87-amino-acid chain; its full sequence is Small ribosomal subunit protein bS20 (87 aa).

The segment covering 1–11 (MANIKSKKKRI) has biased composition (basic residues). The segment at 1–25 (MANIKSKKKRIKTNEKARQRNKAIR) is disordered.

It belongs to the bacterial ribosomal protein bS20 family.

In terms of biological role, binds directly to 16S ribosomal RNA. In Corynebacterium kroppenstedtii (strain DSM 44385 / JCM 11950 / CIP 105744 / CCUG 35717), this protein is Small ribosomal subunit protein bS20.